We begin with the raw amino-acid sequence, 395 residues long: Multidrug resistance protein MdtL (395 aa).

The next 12 helical transmembrane spans lie at 4-24, 42-62, 69-89, 93-113, 131-151, 158-178, 217-237, 247-267, 271-291, 295-315, 333-353, and 358-378; these read FLLC…MYLV, IAFS…GKIA, PVAI…SRAS, LFLS…VVAF, LLNG…HLIM, SLFY…LFIL, VSVI…VMGF, ALTA…LGLF, TLML…SLAH, VTLF…GVAM, LGIA…ILGI, and MLIG…FSVA.

This sequence belongs to the major facilitator superfamily. DHA1 family. MdtL (TC 2.A.1.2.22) subfamily.

It is found in the cell inner membrane. This Salmonella heidelberg (strain SL476) protein is Multidrug resistance protein MdtL.